The sequence spans 336 residues: MIEADRLISAGATIAEDVADRAIRPKLLAEYVGQPQVRSQMEIFIQAAKRRGDALDHLLIFGPPGLGKTTLANIVANEMGVNLRTTSGPVLEKAGDLAAMLTNLEPHDVLFIDEIHRLSPVVEEVLYPAMEDYQLDIMIGEGPAARSIKIDLPPFTLIGATTRAGSLTSPLRDRFGIVQRLEFYQVPDLQHIVGRSARHMGLEMSDDGALEVARRARGTPRIANRLLRRVRDFAEVKHDGAISAEIAAQALDMLNVDAEGFDYMDRKLLLAVIDKFFGGPVGLDNLAAAIGEERETIEDVLEPYLIQQGFLQRTPRGRMATVRAWNHFGITPPEMP.

Residues 4-184 form a large ATPase domain (RuvB-L) region; that stretch reads ADRLISAGAT…FGIVQRLEFY (181 aa). ATP contacts are provided by residues isoleucine 23, arginine 24, glycine 65, lysine 68, threonine 69, threonine 70, 131–133, arginine 174, tyrosine 184, and arginine 221; that span reads EDY. Threonine 69 is a Mg(2+) binding site. The segment at 185–255 is small ATPAse domain (RuvB-S); that stretch reads QVPDLQHIVG…IAAQALDMLN (71 aa). Residues 258–336 are head domain (RuvB-H); that stretch reads AEGFDYMDRK…HFGITPPEMP (79 aa). The DNA site is built by arginine 294, arginine 313, and arginine 318.

The protein belongs to the RuvB family. As to quaternary structure, homohexamer. Forms an RuvA(8)-RuvB(12)-Holliday junction (HJ) complex. HJ DNA is sandwiched between 2 RuvA tetramers; dsDNA enters through RuvA and exits via RuvB. An RuvB hexamer assembles on each DNA strand where it exits the tetramer. Each RuvB hexamer is contacted by two RuvA subunits (via domain III) on 2 adjacent RuvB subunits; this complex drives branch migration. In the full resolvosome a probable DNA-RuvA(4)-RuvB(12)-RuvC(2) complex forms which resolves the HJ.

It localises to the cytoplasm. The enzyme catalyses ATP + H2O = ADP + phosphate + H(+). Functionally, the RuvA-RuvB-RuvC complex processes Holliday junction (HJ) DNA during genetic recombination and DNA repair, while the RuvA-RuvB complex plays an important role in the rescue of blocked DNA replication forks via replication fork reversal (RFR). RuvA specifically binds to HJ cruciform DNA, conferring on it an open structure. The RuvB hexamer acts as an ATP-dependent pump, pulling dsDNA into and through the RuvAB complex. RuvB forms 2 homohexamers on either side of HJ DNA bound by 1 or 2 RuvA tetramers; 4 subunits per hexamer contact DNA at a time. Coordinated motions by a converter formed by DNA-disengaged RuvB subunits stimulates ATP hydrolysis and nucleotide exchange. Immobilization of the converter enables RuvB to convert the ATP-contained energy into a lever motion, pulling 2 nucleotides of DNA out of the RuvA tetramer per ATP hydrolyzed, thus driving DNA branch migration. The RuvB motors rotate together with the DNA substrate, which together with the progressing nucleotide cycle form the mechanistic basis for DNA recombination by continuous HJ branch migration. Branch migration allows RuvC to scan DNA until it finds its consensus sequence, where it cleaves and resolves cruciform DNA. The polypeptide is Holliday junction branch migration complex subunit RuvB (Salmonella agona (strain SL483)).